The following is a 2211-amino-acid chain: MAMALAVGAPSEQRGNLPYNTLKDGPTVDSMKATTDGKNGQGESAFWDTCVHTVFREHCQRAPNSPAVNAWDGSFTYAELDSLSDAIASVLILSGVGPESIIPIYMQKSRWTTVAILGVLKSGGAFTLLDPSHPRSRVEEISKEIQARFILTSEKLSKQCLEMFSVLVVEHLSRACLPSPGQAGHTRSRPENAAYIAFTSGSTGKPKGIVIEHRSYCSGARSHLKVFGIDSTSRVLQFASYAFDVSIMETLSTLMAGGCLCVMSESERSDPNLFVVSYKNLRISHCFMTPSFARTVPWTECCNPPPTLIVGGELMRPSDARAYKEMGIRCMNAYGPAECSVNVSVQSRVEAAVDPRNIGYTTGATAWIISPENPEELMPTGTVGELLVEGPIVGRGYLNDPKATRQAFIDTPAWLRRHRKGTSYQHRVYRTGDLASLDSITGALLLHGRKDAQVKIRGQRVELPDIEHHLQLTLPNDNAEVIVEKVTFSDDGSEKLIAFVLVRPSNTDSVIGNTGDRLFLAPQSQIMEQFAISKKHLQTHLPSYMVPDIFIPISTLPQTASGKTDRKALRTRAAALSRRDVQCFLLSPAGGKRPPSTPKEATIRSLYSNVLNLPIDLIGMDDTFLRLGGDSLQAIRLVAAARAAGLILHAKDILSSQSTLAEQSKRAGLIQTIDRTWESSPPFALLHGPTRHAIVDLAQKQCRVPSNLIEDIYPCTALQEGMFITSLKHPGMYTGQIIFDIPDRMELPRLKAAWLSVVSENAALRTRIIETHEGLMQAVIVDDFVWEEETDEMLLSSDGEALEITKIGVPLVRFRYRPRHRQLMMTIHHSIWDGWSLRLVHEQLQRAYIGRDLLPSTSYRSFIQYTQELPGADEFWASELAGVNAPIFPTLPSGNYRPRVNASHRHVVRNLASTGKEEHTAATYIHLAWSLLVAHYTDADETVYGVTVNGRSADVPGIENIVGPTIATVPTRIRVNEEDTVEMALDHVQDALARMIPYEQAGLQRISRCSRDASEACRFQNLLIIEAPTDSDVDCEKNEAGNFSIIGGTTQTGMDYTAFSSYAMMLVFRTSANKSAISFDITYDAQVIGHDEVERMAHQFEHVLRHIYTLATGRIGDISFIGPRDIEQVQQWNSSMPPADNRFLQELIFAQCSRRPQASAIISWDGSWTYRELWAHSSFFARQLQRYGVTRGTPVAVCLDRSRWSIAVILGVLLARGTCVLIDLLAPRQRVRDILQIAGTGILVHSHATATLTSGLCPTVINVSFLAAQSDSSQPEFPFTLETWGGTPEDLAFIIFTSGSTGHPKGIEMPHRTLSTSISHHSAGMRVTSSSRVLHFSSYAFDVSIYEIFTTLAAGGTICVPSEFDRMNNLAGFIQDTQVNWAFLTPSTARSLNPADVPLLTTLVLGGEAVTHESVEVWAKGRSLINGYGPAEATICGVGNIPEAGWKSGVVGRIIGGLGWVTVPSDPNRLAAVGAVGELLLEGPFLARGYLNLPEVTKAAFIDPPSWRTRIPAPSPYSFLYRTGDLVRYQPDGSIQYVGRKDSRVKLRGQLVDLGAVEASVMRVYPAAGQVVADVLVSENTARLIAMVKLGPSVTENHDGPMFAAPDLVFNEAAASIQARLRAIVPAYMVPSMFIPLRHIPRTLTGKTDRRRLRDKILSLSHSDLQRYMMSSSTKTPMSDDNERRLQEIWAEVLQLPCEAIGREDSFLSLGGESLATMKMVALARRVGFMFAVTDVMNNTSLSTLARSRHLITEQAILTSSPSLSLPTIEGESLQEILRPLLNAGHIQGGNDIAAIHPVTAAQAFLVQRYPWSHFQFDLSGAVSPSKLQTACTALMARFTILRTVFVEHAGCLLQLVLREVPNRVHEITTNEPLDDFCNSVCQQQQDVCVVNSTTLPTLFTLVSNRQLNRHRLLLRLAHAQYDLTTIPLIVQSLADEYNRTLRSGFSADFGYYLSHHKRQNNDDRSHNFWKRYLSGSSMMSTNQTADPTTVQERVFHVTGSCIIIPTSHPPDITIATAVKAAVCLVLAARTGCTDIVIGQTVDARCSSADSTLDQIVGPCTNYIPYRLSVCCSKTALEYLRSAQAQHTTCLRYSSLDLDQIVAKCTSWPSSTQFGYIVQHQDTGAELALTLGGDTTSLPMTSYGRVFPQGEVWIGSTPCSTGLRIDVIALSAVLSQKDAQTMAEEVGAALEKLLGCGYRRLSHLIGNTFAT.

Residues 76–475 are adenylation 1; the sequence is TYAELDSLSD…IEHHLQLTLP (400 aa). In terms of domain architecture, Carrier 1 spans 594–671; the sequence is PPSTPKEATI…EQSKRAGLIQ (78 aa). At S631 the chain carries O-(pantetheine 4'-phosphoryl)serine. The tract at residues 710–975 is condensation 1; the sequence is EDIYPCTALQ…IATVPTRIRV (266 aa). The interval 1169–1563 is adenylation 2; sequence TYRELWAHSS…LGAVEASVMR (395 aa). The region spanning 1677-1756 is the Carrier 2 domain; the sequence is PMSDDNERRL…RSRHLITEQA (80 aa). Position 1714 is an O-(pantetheine 4'-phosphoryl)serine (S1714). The interval 1814 to 2069 is condensation 2; the sequence is HFQFDLSGAV…CTNYIPYRLS (256 aa).

It belongs to the NRP synthetase family.

The catalysed reaction is L-proline + L-tryptophan + 2 ATP = brevianamide F + 2 AMP + 2 diphosphate + 2 H(+). Its pathway is mycotoxin biosynthesis. Functionally, nonribosomal peptide synthetase; part of the gene cluster that mediates the biosynthesis of fumitremorgins, indole alkaloids that carry not only intriguing chemical structures, but also interesting biological and pharmacological activities. The biosynthesis of fumitremorgin-type alkaloids begins by condensation of the two amino acids L-tryptophan and L-proline to brevianamide F, catalyzed by the non-ribosomal peptide synthetase ftmA. Brevianamide F is then prenylated by the prenyltransferase ftmPT1/ftmB in the presence of dimethylallyl diphosphate, resulting in the formation of tryprostatin B. The three cytochrome P450 monooxygenases, ftmP450-1/ftmC, ftmP450-2/ftmE and ftmP450-3/FtmG, are responsible for the conversion of tryprostatin B to 6-hydroxytryprostatin B, tryprostatin A to fumitremorgin C and fumitremorgin C to 12,13-dihydroxyfumitremorgin C, respectively. The putative methyltransferase ftmMT/ftmD is expected for the conversion of 6-hydroxytryprostatin B to tryprostatin A. FtmPT2/FtmH catalyzes the prenylation of 12,13-dihydroxyfumitre-morgin C in the presence of dimethylallyl diphosphate, resulting in the formation of fumitremorgin B. Fumitremorgin B is further converted to verruculogen by ftmOx1/ftmF via the insertion of an endoperoxide bond between the two prenyl moieties. In some fungal species, verruculogen is further converted to fumitremorgin A, but the enzymes involved in this step have not been identified yet. This is Nonribosomal peptide synthetase 13 from Aspergillus fumigatus (Neosartorya fumigata).